The chain runs to 806 residues: Hyperosmolality-gated Ca2+ permeable channel 1.8 (806 aa).

Transmembrane regions (helical) follow at residues 7 to 27 (IGVS…AFAV), 102 to 122 (IYTL…VVLV), 157 to 177 (KFFF…FMLY), 375 to 395 (LVIG…IAFV), 427 to 447 (FLPG…LLIM), 467 to 487 (YYYF…TAFE), 512 to 532 (ATFF…GEIL), 576 to 596 (FLLG…ILIF), 626 to 646 (VHGR…GLLA), and 650 to 670 (AADS…FHKY). The disordered stretch occupies residues 726-786 (SSSSSSEKET…HYASAYEQSS (61 aa)). Residues 731–750 (SEKETHQEETPEVRVDKHET) are compositionally biased toward basic and acidic residues. Phosphothreonine is present on Thr-735. Residues 751-762 (QSSSPVTELGTS) are compositionally biased toward polar residues. A compositionally biased stretch (low complexity) spans 775-786 (SSHYASAYEQSS).

It belongs to the CSC1 (TC 1.A.17) family.

It is found in the golgi apparatus membrane. The protein localises to the cell membrane. Its function is as follows. Acts as an osmosensitive calcium-permeable cation channel. This is Hyperosmolality-gated Ca2+ permeable channel 1.8 from Arabidopsis thaliana (Mouse-ear cress).